Reading from the N-terminus, the 763-residue chain is DEK domain-containing chromatin-associated protein 3 (763 aa).

2 disordered regions span residues 1-324 (MGED…RERK) and 458-681 (TGDV…SDKV). Over residues 11–20 (PTANKTTSLE) the composition is skewed to polar residues. Composition is skewed to basic and acidic residues over residues 32 to 44 (AGGKETQELAKDE), 72 to 97 (SEVKKNEDNAETQKMEEKVEVTKDEG), 124 to 172 (TVMK…KANG), and 180 to 242 (DIKE…KVED). Residues 60–96 (KDDEKAETEDKESEVKKNEDNAETQKMEEKVEVTKDE) are a coiled coil. The stretch at 214–286 (GKEKEDKEEN…KEESKGSKKR (73 aa)) forms a coiled coil. Residues 243–252 (EKEGSEDEND) show a composition bias toward acidic residues. Positions 253–264 (NEKVESKDAKED) are enriched in basic and acidic residues. Over residues 265 to 277 (EKEETNDDKEDEK) the composition is skewed to acidic residues. The short motif at 284-291 (KKRGKGTS) is the Nuclear localization signal 1 element. The segment covering 295-311 (KVREKNKTEEVKKDAEP) has biased composition (basic and acidic residues). The span at 475 to 484 (KGAKRKRTPK) shows a compositional bias: basic residues. The short motif at 483–490 (PKKTSPTA) is the Nuclear localization signal 2 element. The segment covering 485–496 (KTSPTAGSSSSK) has biased composition (low complexity). Positions 513-551 (KKSLAHSDDESEEEKEEEEKQEEEKAEEKEEKKEEENEN) form a coiled coil. Positions 521–533 (DESEEEKEEEEKQ) are enriched in acidic residues. Residues 534–547 (EEEKAEEKEEKKEE) are compositionally biased toward basic and acidic residues. Residues 557 to 578 (SEDEAPQPSESEEKDESEEHSE) show a composition bias toward acidic residues. Composition is skewed to low complexity over residues 606-615 (AVVAAKSSPP) and 650-660 (PIKASPAPSKS). The span at 661-681 (ASKEKPVKRAGKGKDKPSDKV) shows a compositional bias: basic and acidic residues. Residues 676-731 (KPSDKVLKNAIVEILKRVDFSTATFTDILKELAKEFTEDLTPRKSSIKMIIQEELT) enclose the DEK-C domain. 2 consecutive DNA-binding regions follow at residues 694–708 (DFSTATFTDILKELA) and 723–727 (KMIIQ). Residues 723-753 (KMIIQEELTKLADEEEEEEKKEEDSEKEEAG) are a coiled coil. The tract at residues 730-763 (LTKLADEEEEEEKKEEDSEKEEAGGSGGGEEVKA) is disordered. Gly residues predominate over residues 753–763 (GGSGGGEEVKA).

Found in a mRNA splicing-dependent exon junction complex (EJC). Binds specifically histones H3 and H4. Interacts with TOP1A, SCC3, At1g61730, At1g20940, At1g13930, DEK4, HDT1, NIT1, SHL, CYP19-1, GEBPL, HSP70-3, PDP2, PDP3, KIN2, RPL11A and PDS5A. In terms of tissue distribution, highly expressed in young seedlings.

Its subcellular location is the nucleus. The protein resides in the nucleolus. Chromatin-associated protein which contributes to the modulation of chromatin structure (such as super-helical structure of DNA) and function. Binds to chromatin of protein-coding genes throughout the genome to regulate nucleosome occupancy and chromatin accessibility, and to modulate the expression of target genes. Negative regulator of stress tolerance (e.g. high salt). This chain is DEK domain-containing chromatin-associated protein 3, found in Arabidopsis thaliana (Mouse-ear cress).